The following is a 330-amino-acid chain: Endo-1,4-beta-xylanase (330 aa).

The GH10 domain occupies 2–330; sequence CSSIPSLREV…KPAFWRVVNI (329 aa). E133 (proton donor) is an active-site residue. E240 serves as the catalytic Nucleophile.

It belongs to the glycosyl hydrolase 10 (cellulase F) family. Cytoplasmic xylanase subfamily.

Its subcellular location is the cytoplasm. The catalysed reaction is Endohydrolysis of (1-&gt;4)-beta-D-xylosidic linkages in xylans.. It functions in the pathway glycan degradation; xylan degradation. The protein is Endo-1,4-beta-xylanase (xynA) of Geobacillus stearothermophilus (Bacillus stearothermophilus).